Here is a 162-residue protein sequence, read N- to C-terminus: NADH-quinone oxidoreductase subunit I (162 aa).

2 consecutive 4Fe-4S ferredoxin-type domains span residues 53–83 and 93–122; these read LRRYPNGEERCIACKLCEAVCPALAITIDSA and TRYDIDLFKCIFCGFCEESCPVDSIVETHI. [4Fe-4S] cluster-binding residues include C63, C66, C69, C73, C102, C105, C108, and C112.

The protein belongs to the complex I 23 kDa subunit family. NDH-1 is composed of 14 different subunits. Subunits NuoA, H, J, K, L, M, N constitute the membrane sector of the complex. The cofactor is [4Fe-4S] cluster.

Its subcellular location is the cell inner membrane. The catalysed reaction is a quinone + NADH + 5 H(+)(in) = a quinol + NAD(+) + 4 H(+)(out). Its function is as follows. NDH-1 shuttles electrons from NADH, via FMN and iron-sulfur (Fe-S) centers, to quinones in the respiratory chain. The immediate electron acceptor for the enzyme in this species is believed to be ubiquinone. Couples the redox reaction to proton translocation (for every two electrons transferred, four hydrogen ions are translocated across the cytoplasmic membrane), and thus conserves the redox energy in a proton gradient. The polypeptide is NADH-quinone oxidoreductase subunit I (Xanthomonas axonopodis pv. citri (strain 306)).